We begin with the raw amino-acid sequence, 216 residues long: RNA chaperone ProQ (216 aa).

The span at 105–115 (ESKAKVAEKRK) shows a compositional bias: basic and acidic residues. The interval 105–159 (ESKAKVAEKRKAQNAAKPGAKKSYKSKTVPAFKSSPKGTNQDNVKPKAKLPPPEK) is disordered.

Belongs to the ProQ family.

It is found in the cytoplasm. Functionally, RNA chaperone with significant RNA binding, RNA strand exchange and RNA duplexing activities. This Pseudoalteromonas atlantica (strain T6c / ATCC BAA-1087) protein is RNA chaperone ProQ.